The primary structure comprises 306 residues: D-alanine--D-alanine ligase (306 aa).

Positions 102 to 300 (KHVAKAAGIP…FGEFLRWMVE (199 aa)) constitute an ATP-grasp domain. ATP is bound at residue 128–183 (PMKPPYVVKPVREGSSFGVVIVKEDQSHPPQVITSSEWRYGDRVMVERYIAGRELT). Positions 252, 267, and 269 each coordinate Mg(2+).

The protein belongs to the D-alanine--D-alanine ligase family. The cofactor is Mg(2+). Mn(2+) serves as cofactor.

Its subcellular location is the cytoplasm. It carries out the reaction 2 D-alanine + ATP = D-alanyl-D-alanine + ADP + phosphate + H(+). It functions in the pathway cell wall biogenesis; peptidoglycan biosynthesis. Functionally, cell wall formation. The protein is D-alanine--D-alanine ligase of Sinorhizobium fredii (strain NBRC 101917 / NGR234).